The sequence spans 115 residues: NADH-ubiquinone oxidoreductase chain 3 (115 aa).

Helical transmembrane passes span 3–23 (LIMV…VAFW), 55–75 (FFLV…LLPI), and 84–104 (INTM…GLAY).

Belongs to the complex I subunit 3 family. Core subunit of respiratory chain NADH dehydrogenase (Complex I) which is composed of 45 different subunits. Interacts with TMEM186. Interacts with TMEM242.

The protein localises to the mitochondrion inner membrane. It carries out the reaction a ubiquinone + NADH + 5 H(+)(in) = a ubiquinol + NAD(+) + 4 H(+)(out). Functionally, core subunit of the mitochondrial membrane respiratory chain NADH dehydrogenase (Complex I) which catalyzes electron transfer from NADH through the respiratory chain, using ubiquinone as an electron acceptor. Essential for the catalytic activity of complex I. The polypeptide is NADH-ubiquinone oxidoreductase chain 3 (Scotinomys teguina (Alston's brown mouse)).